Consider the following 229-residue polypeptide: 7-cyano-7-deazaguanine synthase (229 aa).

Residue 12–22 (LSGGMDSCVCA) coordinates ATP. Residues Cys-194, Cys-202, Cys-205, and Cys-208 each contribute to the Zn(2+) site.

The protein belongs to the QueC family. Zn(2+) is required as a cofactor.

The enzyme catalyses 7-carboxy-7-deazaguanine + NH4(+) + ATP = 7-cyano-7-deazaguanine + ADP + phosphate + H2O + H(+). It functions in the pathway purine metabolism; 7-cyano-7-deazaguanine biosynthesis. Catalyzes the ATP-dependent conversion of 7-carboxy-7-deazaguanine (CDG) to 7-cyano-7-deazaguanine (preQ(0)). The sequence is that of 7-cyano-7-deazaguanine synthase from Acidobacterium capsulatum (strain ATCC 51196 / DSM 11244 / BCRC 80197 / JCM 7670 / NBRC 15755 / NCIMB 13165 / 161).